The primary structure comprises 192 residues: Bifunctional protein PyrR (192 aa).

A PRPP-binding motif is present at residues V107–T119.

This sequence belongs to the purine/pyrimidine phosphoribosyltransferase family. PyrR subfamily.

It carries out the reaction UMP + diphosphate = 5-phospho-alpha-D-ribose 1-diphosphate + uracil. Functionally, regulates the transcription of the pyrimidine nucleotide (pyr) operon in response to exogenous pyrimidines. Also displays a weak uracil phosphoribosyltransferase activity which is not physiologically significant. The polypeptide is Bifunctional protein PyrR (Corynebacterium efficiens (strain DSM 44549 / YS-314 / AJ 12310 / JCM 11189 / NBRC 100395)).